A 96-amino-acid chain; its full sequence is Co-chaperonin GroES (96 aa).

This sequence belongs to the GroES chaperonin family. Heptamer of 7 subunits arranged in a ring. Interacts with the chaperonin GroEL.

It localises to the cytoplasm. Its function is as follows. Together with the chaperonin GroEL, plays an essential role in assisting protein folding. The GroEL-GroES system forms a nano-cage that allows encapsulation of the non-native substrate proteins and provides a physical environment optimized to promote and accelerate protein folding. GroES binds to the apical surface of the GroEL ring, thereby capping the opening of the GroEL channel. The chain is Co-chaperonin GroES from Haemophilus influenzae (strain ATCC 51907 / DSM 11121 / KW20 / Rd).